A 445-amino-acid chain; its full sequence is Rab GDP dissociation inhibitor beta (445 aa).

An N-acetylmethionine modification is found at Met1. Residue Lys57 is modified to N6-succinyllysine. The residue at position 112 (Lys112) is an N6-acetyllysine. A Phosphoserine modification is found at Ser130. N6-acetyllysine is present on Lys269. Residue Ser382 is modified to Phosphoserine.

The protein belongs to the Rab GDI family. As to quaternary structure, interacts with RHOH. Interacts with the GDP-bound inactive forms of RAB3A, RAB3B, RAB3C, RAB5A, RAB5B, RAB5C, RAB8A, RAB8B, RAB10, RAB12, RAB35, and RAB43; binds RAB3D to a lesser extent. Interacts with DZIP1; this interaction negatively regulates the interaction of GDI2 with GDP-bound RAB8A. As to expression, ubiquitously expressed.

It localises to the cytoplasm. It is found in the membrane. The protein localises to the golgi apparatus. Its subcellular location is the trans-Golgi network. GDP-dissociation inhibitor preventing the GDP to GTP exchange of most Rab proteins. By keeping these small GTPases in their inactive GDP-bound form regulates intracellular membrane trafficking. Negatively regulates protein transport to the cilium and ciliogenesis through the inhibition of RAB8A. This is Rab GDP dissociation inhibitor beta (Gdi2) from Rattus norvegicus (Rat).